Consider the following 531-residue polypeptide: Light-independent protochlorophyllide reductase subunit B (531 aa).

Residue Asp-36 participates in [4Fe-4S] cluster binding. Catalysis depends on Asp-291, which acts as the Proton donor. Residue 426 to 427 (GL) coordinates substrate.

It belongs to the ChlB/BchB/BchZ family. Protochlorophyllide reductase is composed of three subunits; ChlL, ChlN and ChlB. Forms a heterotetramer of two ChlB and two ChlN subunits. [4Fe-4S] cluster is required as a cofactor.

The catalysed reaction is chlorophyllide a + oxidized 2[4Fe-4S]-[ferredoxin] + 2 ADP + 2 phosphate = protochlorophyllide a + reduced 2[4Fe-4S]-[ferredoxin] + 2 ATP + 2 H2O. It functions in the pathway porphyrin-containing compound metabolism; chlorophyll biosynthesis (light-independent). Functionally, component of the dark-operative protochlorophyllide reductase (DPOR) that uses Mg-ATP and reduced ferredoxin to reduce ring D of protochlorophyllide (Pchlide) to form chlorophyllide a (Chlide). This reaction is light-independent. The NB-protein (ChlN-ChlB) is the catalytic component of the complex. The protein is Light-independent protochlorophyllide reductase subunit B of Prochlorococcus marinus (strain MIT 9211).